Consider the following 481-residue polypeptide: CASP8 and FADD-like apoptosis regulator (481 aa).

DED domains follow at residues 6–78 and 97–172; these read VSAE…RILK and DYRV…LNTK. Positions 6-200 are interaction with CASP8; sequence VSAEVIHQVE…QASLPKLSIK (195 aa). Positions 6–229 are interaction with FADD; the sequence is VSAEVIHQVE…DSQRTLVKTS (224 aa). The interval 6–307 is interaction with CASP8 propeptide; the sequence is VSAEVIHQVE…YASMAQHQDY (302 aa). The interaction with CASP3 stretch occupies residues 197 to 436; the sequence is LSIKYNSRLQ…KLSQQLKQGR (240 aa). The tract at residues 197-481 is interaction with TRAF1 and TRAF2; that stretch reads LSIKYNSRLQ…LRKKLILAPT (285 aa). An interaction with CASP8 subunits p18 and p10 region spans residues 219–481; that stretch reads RDSQRTLVKT…LRKKLILAPT (263 aa). The interval 265-360 is caspase; it reads DTKYLQETFT…RGKPKLFFIQ (96 aa). The segment at 372-481 is interaction with CASP8; that stretch reads SSLEVDGPSI…LRKKLILAPT (110 aa).

Belongs to the peptidase C14A family. TNFRSF6 stimulation triggers recruitment to the death-inducing signaling complex (DISC) formed by TNFRSF6, FADD and CASP8. A proteolytic fragment (p43) stays associated with the DISC. Interacts with RIPK1. Proteolytically processed by CASP8 generating subunits p43 and p12. As to expression, highly expressed in heart.

Functionally, apoptosis regulator protein which may function as a crucial link between cell survival and cell death pathways in mammalian cells. Acts as an inhibitor of TNFRSF6 mediated apoptosis. A proteolytic fragment (p43) is likely retained in the death-inducing signaling complex (DISC) thereby blocking further recruitment and processing of caspase-8 at the complex. Full length and shorter isoforms have been shown either to induce apoptosis or to reduce TNFRSF-triggered apoptosis. Lacks enzymatic (caspase) activity. The protein is CASP8 and FADD-like apoptosis regulator (Cflar) of Mus musculus (Mouse).